Here is a 292-residue protein sequence, read N- to C-terminus: 4-hydroxy-tetrahydrodipicolinate synthase (292 aa).

Residue T45 participates in pyruvate binding. Residue Y133 is the Proton donor/acceptor of the active site. Residue K162 is the Schiff-base intermediate with substrate of the active site. I204 contacts pyruvate.

Belongs to the DapA family. As to quaternary structure, homotetramer; dimer of dimers.

The protein resides in the cytoplasm. It carries out the reaction L-aspartate 4-semialdehyde + pyruvate = (2S,4S)-4-hydroxy-2,3,4,5-tetrahydrodipicolinate + H2O + H(+). It participates in amino-acid biosynthesis; L-lysine biosynthesis via DAP pathway; (S)-tetrahydrodipicolinate from L-aspartate: step 3/4. Functionally, catalyzes the condensation of (S)-aspartate-beta-semialdehyde [(S)-ASA] and pyruvate to 4-hydroxy-tetrahydrodipicolinate (HTPA). This Nitratidesulfovibrio vulgaris (strain DSM 19637 / Miyazaki F) (Desulfovibrio vulgaris) protein is 4-hydroxy-tetrahydrodipicolinate synthase.